The chain runs to 95 residues: Glutamine synthetase and cystathionine beta-lyase binding protein (95 aa).

As to quaternary structure, interacts with glutamine synthetase (TTHA1329) and cystathionine beta-lyase (TTHA1620), but proteins do not form a ternary complex.

Its function is as follows. Binds to glutamine synthetase and cystathionine beta-lyase. May be utilized for the efficient use of nitrogen in the global nitrogen regulation of T.thermophilus. In Thermus thermophilus (strain ATCC 27634 / DSM 579 / HB8), this protein is Glutamine synthetase and cystathionine beta-lyase binding protein.